The following is a 141-amino-acid chain: Putative pre-16S rRNA nuclease (141 aa).

This sequence belongs to the YqgF nuclease family.

Its subcellular location is the cytoplasm. Functionally, could be a nuclease involved in processing of the 5'-end of pre-16S rRNA. The protein is Putative pre-16S rRNA nuclease of Cupriavidus necator (strain ATCC 17699 / DSM 428 / KCTC 22496 / NCIMB 10442 / H16 / Stanier 337) (Ralstonia eutropha).